A 353-amino-acid chain; its full sequence is Holliday junction branch migration complex subunit RuvB (353 aa).

The segment at 4–186 is large ATPase domain (RuvB-L); that stretch reads ADRLIAATHS…FGIVQRLEFY (183 aa). ATP contacts are provided by residues Ile-25, Arg-26, Gly-67, Lys-70, Thr-71, Thr-72, 133–135, Arg-176, Tyr-186, and Arg-223; that span reads EDF. Thr-71 contacts Mg(2+). A small ATPAse domain (RuvB-S) region spans residues 187-257; that stretch reads STADLATIVS…VADLALNLLD (71 aa). Positions 260–353 are head domain (RuvB-H); that stretch reads EHGFDHQDRR…VDEFLDAVDD (94 aa). The DNA site is built by Arg-296, Arg-315, and Arg-320.

It belongs to the RuvB family. As to quaternary structure, homohexamer. Forms an RuvA(8)-RuvB(12)-Holliday junction (HJ) complex. HJ DNA is sandwiched between 2 RuvA tetramers; dsDNA enters through RuvA and exits via RuvB. An RuvB hexamer assembles on each DNA strand where it exits the tetramer. Each RuvB hexamer is contacted by two RuvA subunits (via domain III) on 2 adjacent RuvB subunits; this complex drives branch migration. In the full resolvosome a probable DNA-RuvA(4)-RuvB(12)-RuvC(2) complex forms which resolves the HJ.

The protein localises to the cytoplasm. The catalysed reaction is ATP + H2O = ADP + phosphate + H(+). Functionally, the RuvA-RuvB-RuvC complex processes Holliday junction (HJ) DNA during genetic recombination and DNA repair, while the RuvA-RuvB complex plays an important role in the rescue of blocked DNA replication forks via replication fork reversal (RFR). RuvA specifically binds to HJ cruciform DNA, conferring on it an open structure. The RuvB hexamer acts as an ATP-dependent pump, pulling dsDNA into and through the RuvAB complex. RuvB forms 2 homohexamers on either side of HJ DNA bound by 1 or 2 RuvA tetramers; 4 subunits per hexamer contact DNA at a time. Coordinated motions by a converter formed by DNA-disengaged RuvB subunits stimulates ATP hydrolysis and nucleotide exchange. Immobilization of the converter enables RuvB to convert the ATP-contained energy into a lever motion, pulling 2 nucleotides of DNA out of the RuvA tetramer per ATP hydrolyzed, thus driving DNA branch migration. The RuvB motors rotate together with the DNA substrate, which together with the progressing nucleotide cycle form the mechanistic basis for DNA recombination by continuous HJ branch migration. Branch migration allows RuvC to scan DNA until it finds its consensus sequence, where it cleaves and resolves cruciform DNA. The chain is Holliday junction branch migration complex subunit RuvB from Pseudomonas fluorescens (strain Pf0-1).